Here is a 288-residue protein sequence, read N- to C-terminus: Inositol monophosphatase 2 (288 aa).

Residues glutamate 81, aspartate 101, isoleucine 103, and aspartate 104 each contribute to the Mg(2+) site. Residue glutamate 81 participates in substrate binding. Substrate contacts are provided by residues 103-106 (IDGT), 205-207 (GSS), glutamine 224, and aspartate 231. Mg(2+) is bound at residue aspartate 231.

The protein belongs to the inositol monophosphatase superfamily. Homodimer. Mg(2+) is required as a cofactor.

The protein localises to the cytoplasm. The catalysed reaction is a myo-inositol phosphate + H2O = myo-inositol + phosphate. The enzyme catalyses 1D-myo-inositol 1-phosphate + H2O = myo-inositol + phosphate. It catalyses the reaction 1D-myo-inositol 2-phosphate + H2O = myo-inositol + phosphate. It carries out the reaction 1D-myo-inositol 3-phosphate + H2O = myo-inositol + phosphate. The catalysed reaction is 1D-myo-inositol 4-phosphate + H2O = myo-inositol + phosphate. The enzyme catalyses 1D-myo-inositol 5-phosphate + H2O = myo-inositol + phosphate. It catalyses the reaction 1D-myo-inositol 6-phosphate + H2O = myo-inositol + phosphate. It carries out the reaction alpha-D-glucose 1-phosphate + H2O = D-glucose + phosphate. The catalysed reaction is glycerol 2-phosphate + H2O = glycerol + phosphate. The enzyme catalyses adenosine 2'-phosphate + H2O = adenosine + phosphate. It participates in polyol metabolism; myo-inositol biosynthesis; myo-inositol from D-glucose 6-phosphate: step 2/2. Inhibited by high Li(+) and restricted Mg(2+) concentrations. Functionally, phosphatase that can use myo-inositol monophosphates, myo-inositol 1,4-diphosphate, scyllo-inositol-1,4-diphosphate, glucose-1-phosphate, beta-glycerophosphate and 2'-AMP as substrates in vitro. It is likely that IMPA2 has an as yet unidentified in vivo substrate(s). Has been implicated as the pharmacological target for lithium (Li(+)) action in brain. This chain is Inositol monophosphatase 2, found in Homo sapiens (Human).